The following is a 544-amino-acid chain: GDP-mannose 4,6-dehydratase sdnI (544 aa).

NADP(+) contacts are provided by residues 16-21 (GITGQD), Arg-41, 64-65 (DM), and 86-90 (LAAQS). Ser-90 provides a ligand contact to substrate. Active-site nucleophile residues include Glu-135 and Tyr-157. Tyr-157 serves as a coordination point for substrate. Lys-161 serves as a coordination point for NADP(+). Residue Asn-186 participates in substrate binding. The NADP(+) site is built by His-187 and Arg-192. Residues 192–200 (RGTTFVTRK), Gly-219, Arg-225, and 303–306 (RPVE) contribute to the substrate site. Residues 366-406 (GETTSAVNSSPSSTAGDTYKASDGWSTSGAEGSEQTECSSV) are disordered. Composition is skewed to polar residues over residues 368-381 (TTSA…STAG) and 389-404 (GWST…TECS).

It belongs to the NAD(P)-dependent epimerase/dehydratase family. GDP-mannose 4,6-dehydratase subfamily. Requires NADP(+) as cofactor.

The enzyme catalyses GDP-alpha-D-mannose = GDP-4-dehydro-alpha-D-rhamnose + H2O. It participates in antibiotic biosynthesis. GDP-mannose 4,6-dehydratase; part of the gene cluster that mediates the biosynthesis of sordarin and hypoxysordarin, glycoside antibiotics with a unique tetracyclic diterpene aglycone structure. First, the geranylgeranyl diphosphate synthase sdnC constructs GGDP from farnesyl diphosphate and isopentenyl diphosphate. The diterpene cyclase sdnA then catalyzes the cyclization of GGDP to afford cycloaraneosene. Cycloaraneosene is then hydroxylated four times by the putative cytochrome P450 monooxygenases sdnB, sdnE, sdnF and sdnH to give a hydroxylated cycloaraneosene derivative such as cycloaraneosene-8,9,13,19-tetraol. Although the order of the hydroxylations is unclear, at least C8, C9 and C13 of the cycloaraneosene skeleton are hydroxylated before the sordaricin formation. Dehydration of the 13-hydroxy group of the hydroxylated cycloaraneosene derivative might be catalyzed by an unassigned hypothetical protein such as sdnG and sdnP to construct the cyclopentadiene moiety. The FAD-dependent oxidoreductase sdnN is proposed to catalyze the oxidation at C9 of the hydroxylated cycloaraneosene derivative and also catalyze the Baeyer-Villiger oxidation to give the lactone intermediate. The presumed lactone intermediate would be hydrolyzed to give an acrolein moiety and a carboxylate moiety. Then, [4+2]cycloaddition would occur between the acrolein moiety and the cyclopentadiene moiety to give sordaricin. SdnN might also be involved in the [4+2]cycloaddition after the hypothesized oxidation to accommodate the oxidized product and prompt the [4+2]cycloaddition. GDP-6-deoxy-D-altrose may be biosynthesized from GDP-D-mannose by the putative GDP-mannose-4,6-dehydratase sdnI and the short-chain dehydrogenase sdnK. The glycosyltransferase sdnJ catalyzes the attachment of 6-deoxy-D-altrose onto the 19-hydroxy group of sordaricin to give 4'-O-demethylsordarin. The methyltransferase sdnD would complete the biosynthesis of sordarin. Sordarin can be further modified into hypoxysordarin. The unique acyl chain at the 3'-hydroxy group of hypoxysordarin would be constructed by an iterative type I PKS sdnO and the trans-acting polyketide methyltransferase sdnL. SdnL would be responsible for the introduction of an alpha-methyl group of the polyketide chain. Alternatively, the beta-lactamase-like protein sdnR might be responsible for the cleavage and transfer of the polyketide chain from the PKS sdnO to sordarin. Two putative cytochrome P450 monooxygenases, sdnQ and sdnT, might catalyze the epoxidations of the polyketide chain to complete the biosynthesis of hypoxysordarin. Transcriptional regulators sdnM and sdnS are presumably encoded for the transcriptional regulation of the expression of the sdn gene cluster. The chain is GDP-mannose 4,6-dehydratase sdnI from Sordaria araneosa (Pleurage araneosa).